The sequence spans 862 residues: Protein SEY1 (862 aa).

Residues 1–743 are Cytoplasmic-facing; that stretch reads MASNGHFSSV…KRSAIGGITQ (743 aa). The GB1/RHD3-type G domain occupies 48–301; that stretch reads GFNYHLISVF…IPADGFAVYA (254 aa). 58–65 is a binding site for GTP; it reads GSQSTGKS. The stretch at 476 to 500 forms a coiled coil; it reads SDYKQELSLFQKDLEKISSQLRKDE. Residues 744–764 traverse the membrane as a helical segment; sequence VPLYFYGLLLALGWNEIIAVL. The Lumenal portion of the chain corresponds to 765-767; it reads RNP. The chain crosses the membrane as a helical span at residues 768–788; it reads IYFIFLLLIGVGAYVTFRLNL. At 789 to 862 the chain is on the cytoplasmic side; that stretch reads WGPMINMAEA…TSDDDNDDDL (74 aa). Positions 818-862 are disordered; sequence SDSGRQAMAMSGRNARGTEEYEMSSNLKSKGRRTDTSDDDNDDDL.

It belongs to the TRAFAC class dynamin-like GTPase superfamily. GB1/RHD3 GTPase family. RHD3 subfamily.

It is found in the endoplasmic reticulum membrane. Functionally, cooperates with the reticulon proteins and tubule-shaping DP1 family proteins to generate and maintain the structure of the tubular endoplasmic reticulum network. Has GTPase activity, which is required for its function in ER organization. This chain is Protein SEY1, found in Arthroderma otae (strain ATCC MYA-4605 / CBS 113480) (Microsporum canis).